The sequence spans 439 residues: Tol-Pal system protein TolB (439 aa).

Positions M1 to T22 are cleaved as a signal peptide.

The protein belongs to the TolB family. The Tol-Pal system is composed of five core proteins: the inner membrane proteins TolA, TolQ and TolR, the periplasmic protein TolB and the outer membrane protein Pal. They form a network linking the inner and outer membranes and the peptidoglycan layer.

It localises to the periplasm. Its function is as follows. Part of the Tol-Pal system, which plays a role in outer membrane invagination during cell division and is important for maintaining outer membrane integrity. This Xylella fastidiosa (strain 9a5c) protein is Tol-Pal system protein TolB.